The sequence spans 445 residues: Phosphoglucosamine mutase (445 aa).

Ser101 functions as the Phosphoserine intermediate in the catalytic mechanism. Mg(2+) is bound by residues Ser101, Asp240, Asp242, and Asp244. Ser101 is modified (phosphoserine).

Belongs to the phosphohexose mutase family. Requires Mg(2+) as cofactor. Activated by phosphorylation.

The catalysed reaction is alpha-D-glucosamine 1-phosphate = D-glucosamine 6-phosphate. In terms of biological role, catalyzes the conversion of glucosamine-6-phosphate to glucosamine-1-phosphate. This chain is Phosphoglucosamine mutase, found in Pseudomonas fluorescens (strain Pf0-1).